We begin with the raw amino-acid sequence, 126 residues long: Thiocyanate hydrolase subunit alpha (126 aa).

In terms of assembly, heterododecamer consisting of 4 alpha, 4 beta, and 4 gamma subunits.

It catalyses the reaction thiocyanate + H2O + 2 H(+) = carbonyl sulfide + NH4(+). It functions in the pathway organosulfur degradation; thiocyanate degradation. Involved in the degradation of thiocyanate. The sequence is that of Thiocyanate hydrolase subunit alpha (scnA) from Thiobacillus thioparus.